The primary structure comprises 395 residues: Ribose-phosphate pyrophosphokinase 2, chloroplastic (395 aa).

Residues 1–23 are compositionally biased toward low complexity; it reads MASPAPRSLSSSSSSSSSSFCPS. Residues 1–33 form a disordered region; it reads MASPAPRSLSSSSSSSSSSFCPSISPPPRSPSR. A chloroplast-targeting transit peptide spans 1–42; that stretch reads MASPAPRSLSSSSSSSSSSFCPSISPPPRSPSRASLPFSVKC. 4 residues coordinate Mg(2+): Asp-209, His-211, Asp-220, and Asp-224. The interval 295–310 is binding of phosphoribosylpyrophosphate; it reads GKVAVMLDDMIDTAGT.

It belongs to the ribose-phosphate pyrophosphokinase family.

The protein localises to the plastid. Its subcellular location is the chloroplast. The catalysed reaction is D-ribose 5-phosphate + ATP = 5-phospho-alpha-D-ribose 1-diphosphate + AMP + H(+). In Spinacia oleracea (Spinach), this protein is Ribose-phosphate pyrophosphokinase 2, chloroplastic (PRS2).